We begin with the raw amino-acid sequence, 228 residues long: 6-carboxyhexanoate--CoA ligase (228 aa).

It belongs to the BioW family. Homodimer. Requires Mg(2+) as cofactor.

It carries out the reaction heptanedioate + ATP + CoA = 6-carboxyhexanoyl-CoA + AMP + diphosphate. It participates in metabolic intermediate metabolism; pimeloyl-CoA biosynthesis; pimeloyl-CoA from pimelate: step 1/1. Its function is as follows. Catalyzes the transformation of pimelate into pimeloyl-CoA with concomitant hydrolysis of ATP to AMP. This Staphylococcus epidermidis (strain ATCC 35984 / DSM 28319 / BCRC 17069 / CCUG 31568 / BM 3577 / RP62A) protein is 6-carboxyhexanoate--CoA ligase.